Reading from the N-terminus, the 363-residue chain is NADH-quinone oxidoreductase subunit H (363 aa).

10 helical membrane passes run Val29–Trp49, Gly62–Phe82, Phe96–Phe116, Val127–Gly147, Ala163–Ala183, Phe202–Val222, Ile239–Leu257, Ile264–Val286, Thr299–Phe319, and Phe339–Ile359.

Belongs to the complex I subunit 1 family. In terms of assembly, NDH-1 is composed of 14 different subunits. Subunits NuoA, H, J, K, L, M, N constitute the membrane sector of the complex.

The protein localises to the cell inner membrane. It carries out the reaction a quinone + NADH + 5 H(+)(in) = a quinol + NAD(+) + 4 H(+)(out). In terms of biological role, NDH-1 shuttles electrons from NADH, via FMN and iron-sulfur (Fe-S) centers, to quinones in the respiratory chain. The immediate electron acceptor for the enzyme in this species is believed to be ubiquinone. Couples the redox reaction to proton translocation (for every two electrons transferred, four hydrogen ions are translocated across the cytoplasmic membrane), and thus conserves the redox energy in a proton gradient. This subunit may bind ubiquinone. The sequence is that of NADH-quinone oxidoreductase subunit H from Xanthomonas campestris pv. campestris (strain B100).